The following is a 336-amino-acid chain: Prenytransferase ascA (336 aa).

Positions 1–26 are disordered; it reads MAAKSRSPKRGTSEKTPLVEKEAPYQ. Positions 11–23 are enriched in basic and acidic residues; sequence GTSEKTPLVEKEA. 8 consecutive transmembrane segments (helical) span residues 52 to 72, 74 to 94, 131 to 151, 179 to 199, 206 to 226, 251 to 271, 272 to 292, and 314 to 334; these read PHGNYMIYFPHIIGLMYASAI, PTELSVLGHRAAIFAIWTFLM, GHVFTLILTLLGFAAIQSLPI, VILGSTLASTIALSAYSVGLP, FVPTLCLSATIMLLVVFYDVV, LEGLFAFITLSIAGSLTTLGY, LVGMGHWFYLFSVGGLTFGLV, and FAILNLLTGFIMEYATKDYVV.

The protein belongs to the UbiA prenyltransferase family. It depends on Mg(2+) as a cofactor.

The protein resides in the membrane. It catalyses the reaction orsellinate + (2E,6E)-farnesyl diphosphate = ilicicolinate B + diphosphate. It functions in the pathway secondary metabolite biosynthesis; terpenoid biosynthesis. Prenytransferase; part of the asc-1 gene cluster that mediates the biosynthesis of both ascochlorin and ascofuranone, a strong inhibitor of cyanide-insensitive alternative oxidases and a promising drug candidate against African trypanosomiasis. The first step in the pathway is performed by the non-reducing polyketide synthase ascC that produces orsellinic acid by condensing acetyl-CoA with 3 malonyl-CoA units. Orsellinic acid is then prenylated by the prenyltransferase ascA to yield ilicicolinic acid B. Ilicicolinic acid B is further reduced to ilicicolin B by the reductase ascB. The halogenase ascD then chlorinates ilicicolin B to produce ilicicolin A which is converted to ilicicolin A epoxide by the cytochrome P450 monooxygenase ascE that catalyzes stereoselective epoxidation of the terminal double bond of the prenyl group. Ilicicolin A epoxide is the last common precursor for the biosynthesis of ascofuranone and ascochlorin. The terpene cyclase ascF produces a monocyclic terpene, and the cyclization reaction is proposed to be initiated by protonation of the terminal epoxide of ilicicolin A epoxide to generate a monocyclic tertiarycation, which is followed by a series of hydride and methyl shifts with abstraction of proton, leading to the formation of the (14S,15R,19R)-trimethylcyclohexanone ring structure of ilicicolin C, which is finally reduced to ascochlorin by the dehydrogenase ascG. On the other hand, ilicicolin A epoxide is hydroxylated by the cytochrome P450 monooxygenase ascH, and the resultant product is cyclized by the terpene cyclase ascI to ascofuranol via protonation-initiated epoxide ring opening, which facilitates the 6-endo-tet cyclization to form the tetrahy-drofuran ring. Finally, ascofuranol is oxidized into ascofuranone by ascJ. The chain is Prenytransferase ascA from Acremonium egyptiacum (Oospora egyptiaca).